The chain runs to 140 residues: Protein ApaG (140 aa).

The ApaG domain maps to 13-137; sequence EARTRDIVVR…FSLHLPGAAM (125 aa).

The protein is Protein ApaG of Caulobacter vibrioides (strain ATCC 19089 / CIP 103742 / CB 15) (Caulobacter crescentus).